A 115-amino-acid polypeptide reads, in one-letter code: Succinate dehydrogenase assembly factor 3, mitochondrial (115 aa).

The protein belongs to the complex I LYR family. SDHAF3 subfamily. As to quaternary structure, interacts with the iron-sulfur protein subunit within the SDH catalytic dimer.

It is found in the mitochondrion matrix. Plays an essential role in the assembly of succinate dehydrogenase (SDH), an enzyme complex (also referred to as respiratory complex II) that is a component of both the tricarboxylic acid (TCA) cycle and the mitochondrial electron transport chain, and which couples the oxidation of succinate to fumarate with the reduction of ubiquinone (coenzyme Q) to ubiquinol. Promotes maturation of the iron-sulfur protein subunit of the SDH catalytic dimer, protecting it from the deleterious effects of oxidants. May act together with SDHAF1. This is Succinate dehydrogenase assembly factor 3, mitochondrial (acn9) from Nematostella vectensis (Starlet sea anemone).